The chain runs to 1130 residues: 3-hydroxy-3-methylglutaryl-coenzyme A reductase 1 (1130 aa).

At 1 to 46 (MATSLITRKLRSAEATNDVEPGWLKRQVTGVLQSISSHACQHPIHT) the chain is on the cytoplasmic side. Residues 47–67 (IVVIALLASTTYVGLLEGSLF) form a helical membrane-spanning segment. Over 68–242 (DSVRNSRNIA…DLIKHAETID (175 aa)) the chain is Lumenal. N-linked (GlcNAc...) asparagine glycosylation occurs at Asn-148. Residues 242 to 415 (DIVIMTLGYL…FTFYTTILCI (174 aa)) enclose the SSD domain. Residues 243-263 (IVIMTLGYLSMHLSFVSLFFS) traverse the membrane as a helical segment. Topologically, residues 264–270 (MRRLGSN) are cytoplasmic. The chain crosses the membrane as a helical span at residues 271-291 (FWLAATVLFSGVFAFLFGLLV). Residues 292–296 (TTKLG) lie on the Lumenal side of the membrane. Residues 297-317 (VPINVLLLSEGLPFLVVTIGF) traverse the membrane as a helical segment. Residues 318–366 (EKPIILTRAVLTAAADNRGRAGQASSSTTKSIQDSIQTAIKEQGFEIIR) are Cytoplasmic-facing. The helical transmembrane segment at 367-387 (DYCIEIAILIAGAASGVQGGL) threads the bilayer. Topologically, residues 388–389 (RQ) are lumenal. The chain crosses the membrane as a helical span at residues 390 to 410 (FCFLAAWILFFDCVLLFTFYT). The Cytoplasmic segment spans residues 411–476 (TILCIKLEIN…RKLRSSSVRR (66 aa)). A helical membrane pass occupies residues 477–497 (FKILMVGGFVLVNVVNLSTIP). Over 498–601 (FRDSSQGAGL…ESLLKSIEDP (104 aa)) the chain is Lumenal. A helical transmembrane segment spans residues 602–622 (IISKWIIAALTLSIILNGYLF). The Cytoplasmic portion of the chain corresponds to 623 to 1130 (NAARWSIKEP…ARGLTMSSSE (508 aa)). Glu-792 serves as the catalytic Charge relay system. CoA is bound at residue 798–804 (STSRGAK). Residues 859–861 (SRF) and 886–894 (DAMGMNMIS) each bind NADP(+). Residue Lys-926 is the Charge relay system of the active site. Residue 955 to 957 (VLK) participates in CoA binding. Asp-1002 serves as the catalytic Charge relay system. 1097 to 1098 (AH) contributes to the CoA binding site. The Proton donor role is filled by His-1098. An NADP(+)-binding site is contributed by 1102-1103 (NR). The segment covering 1103-1122 (RSAATTRTSTPVSAAVSAAR) has biased composition (low complexity). The tract at residues 1103–1130 (RSAATTRTSTPVSAAVSAARGLTMSSSE) is disordered.

Belongs to the HMG-CoA reductase family.

It is found in the endoplasmic reticulum membrane. The catalysed reaction is (R)-mevalonate + 2 NADP(+) + CoA = (3S)-3-hydroxy-3-methylglutaryl-CoA + 2 NADPH + 2 H(+). It participates in metabolic intermediate biosynthesis; (R)-mevalonate biosynthesis; (R)-mevalonate from acetyl-CoA: step 3/3. Functionally, HMG-CoA reductase; part of the first module of ergosterol biosynthesis pathway that includes the early steps of the pathway, conserved across all eukaryotes, and which results in the formation of mevalonate from acetyl-coenzyme A (acetyl-CoA). Hmg1 and hmg2 catalyze the reduction of hydroxymethylglutaryl-CoA (HMG-CoA) to mevalonate. The first module starts with the action of the cytosolic acetyl-CoA acetyltransferase erg10B that catalyzes the formation of acetoacetyl-CoA. The hydroxymethylglutaryl-CoA synthases erg13A and erg13B then condense acetyl-CoA with acetoacetyl-CoA to form HMG-CoA. The rate-limiting step of the early module is the reduction to mevalonate by the 3-hydroxy-3-methylglutaryl-coenzyme A (HMG-CoA) reductases hmg1 and hmg2. Mevalonate is also a precursor for the extracellular siderophore triacetylfusarinine C (TAFC). The sequence is that of 3-hydroxy-3-methylglutaryl-coenzyme A reductase 1 from Aspergillus fumigatus (strain ATCC MYA-4609 / CBS 101355 / FGSC A1100 / Af293) (Neosartorya fumigata).